A 249-amino-acid polypeptide reads, in one-letter code: Coproheme decarboxylase (249 aa).

Fe-coproporphyrin III contacts are provided by residues Arg131, 145–149 (YPMNK), His172, Gln185, and Ser223. Tyr145 is an active-site residue.

It belongs to the ChdC family. Type 1 subfamily. It depends on Fe-coproporphyrin III as a cofactor.

It catalyses the reaction Fe-coproporphyrin III + 2 H2O2 + 2 H(+) = heme b + 2 CO2 + 4 H2O. It carries out the reaction Fe-coproporphyrin III + H2O2 + H(+) = harderoheme III + CO2 + 2 H2O. The enzyme catalyses harderoheme III + H2O2 + H(+) = heme b + CO2 + 2 H2O. It participates in porphyrin-containing compound metabolism; protoheme biosynthesis. Its function is as follows. Involved in coproporphyrin-dependent heme b biosynthesis. Catalyzes the decarboxylation of Fe-coproporphyrin III (coproheme) to heme b (protoheme IX), the last step of the pathway. The reaction occurs in a stepwise manner with a three-propionate intermediate. The polypeptide is Coproheme decarboxylase (Thermus thermophilus (strain ATCC BAA-163 / DSM 7039 / HB27)).